A 247-amino-acid polypeptide reads, in one-letter code: Probable transcriptional regulatory protein PMT_1423 (247 aa).

It belongs to the TACO1 family.

Its subcellular location is the cytoplasm. This is Probable transcriptional regulatory protein PMT_1423 from Prochlorococcus marinus (strain MIT 9313).